The primary structure comprises 637 residues: Probable ATP-binding protein YheS (637 aa).

ABC transporter domains are found at residues 2 to 246 and 313 to 527; these read IVFS…AQQQ and LKME…KQEN. ATP-binding positions include 34–41 and 345–352; these read GKNGCGKS and GRNGAGKS. The interval 523–559 is disordered; that stretch reads QKQENQTDEAPKENANSAQARKDQKRREAELRAQTQP. Over residues 542-553 the composition is skewed to basic and acidic residues; that stretch reads ARKDQKRREAEL.

This sequence belongs to the ABC transporter superfamily. ABCF family. YheS subfamily.

Functionally, genetic data indicate it may be involved in ribosome assembly or function. Ectopic expression exacerbates the cold-sensitive growth phenotype of a bipA deletion. The protein is Probable ATP-binding protein YheS (yheS) of Escherichia coli O6:H1 (strain CFT073 / ATCC 700928 / UPEC).